We begin with the raw amino-acid sequence, 201 residues long: 3-isopropylmalate dehydratase small subunit (201 aa).

Belongs to the LeuD family. LeuD type 1 subfamily. In terms of assembly, heterodimer of LeuC and LeuD.

It carries out the reaction (2R,3S)-3-isopropylmalate = (2S)-2-isopropylmalate. It functions in the pathway amino-acid biosynthesis; L-leucine biosynthesis; L-leucine from 3-methyl-2-oxobutanoate: step 2/4. In terms of biological role, catalyzes the isomerization between 2-isopropylmalate and 3-isopropylmalate, via the formation of 2-isopropylmaleate. In Shigella boydii serotype 18 (strain CDC 3083-94 / BS512), this protein is 3-isopropylmalate dehydratase small subunit.